The sequence spans 186 residues: Inosine/xanthosine triphosphatase (186 aa).

Gln75 contributes to the Mg(2+) binding site.

This sequence belongs to the YjjX NTPase family. Homodimer. Mg(2+) is required as a cofactor. It depends on Mn(2+) as a cofactor.

It carries out the reaction XTP + H2O = XDP + phosphate + H(+). The enzyme catalyses ITP + H2O = IDP + phosphate + H(+). Phosphatase that hydrolyzes non-canonical purine nucleotides such as XTP and ITP to their respective diphosphate derivatives. Probably excludes non-canonical purines from DNA/RNA precursor pool, thus preventing their incorporation into DNA/RNA and avoiding chromosomal lesions. This is Inosine/xanthosine triphosphatase from Shewanella baltica (strain OS185).